Consider the following 723-residue polypeptide: E3 ubiquitin-protein ligase LRSAM1 (723 aa).

6 LRR repeats span residues 30–51, 56–77, 82–103, 105–127, 128–149, and 151–172; these read ADDI…AFAT, QKKV…SCSL, TIKV…LGQL, ALQV…GNLT, QLQT…VGEL, and SLRT…LAHV. Serine 234 carries the phosphoserine modification. Coiled-coil stretches lie at residues 254 to 380 and 510 to 562; these read SDYE…TESL and ALSS…KPLS. The interval 282-314 is disordered; sequence TQLLQQSSSQKDEILQTVKEEQSRLEQGLSEHQ. A compositionally biased stretch (basic and acidic residues) spans 291 to 314; the sequence is QKDEILQTVKEEQSRLEQGLSEHQ. Residues 569 to 632 form the SAM domain; it reads GMERQLVALL…LRRVQELLDA (64 aa). Serine 604 is subject to Phosphoserine. Positions 642–665 are disordered; sequence PMGEVVTPTAPQEPPESVRPSAPP. 2 consecutive short sequence motifs (PTAP motif) follow at residues 649-652 and 661-664; these read PTAP and PSAP. An RING-type zinc finger spans residues 675-710; the sequence is CVVCLEREAQMIFLNCGHVCCCQQCCQPLRTCPLCR.

Interacts with TSG101. Interacts with PHF23. Interacts with FUS. Post-translationally, ubiquitination promoted by PHF23 leads to proteasomal degradation. Highly expressed in adult spinal cord motoneurons as well as in fetal spinal cord and muscle tissue.

The protein localises to the cytoplasm. The catalysed reaction is S-ubiquitinyl-[E2 ubiquitin-conjugating enzyme]-L-cysteine + [acceptor protein]-L-lysine = [E2 ubiquitin-conjugating enzyme]-L-cysteine + N(6)-ubiquitinyl-[acceptor protein]-L-lysine.. Its pathway is protein modification; protein ubiquitination. E3 ubiquitin-protein ligase that mediates monoubiquitination of TSG101 at multiple sites, leading to inactivate the ability of TSG101 to sort endocytic (EGF receptors) and exocytic (HIV-1 viral proteins) cargos. Bacterial recognition protein that defends the cytoplasm from invasive pathogens. Localizes to several intracellular bacterial pathogens and generates the bacteria-associated ubiquitin signal leading to autophagy-mediated intracellular bacteria degradation (xenophagy). In Homo sapiens (Human), this protein is E3 ubiquitin-protein ligase LRSAM1.